The following is a 290-amino-acid chain: Fructose-1,6-bisphosphatase class 1 (290 aa).

Positions 78, 96, 98, and 99 each coordinate Mg(2+). Residues 99 to 102, Tyr-201, and Lys-226 contribute to the substrate site; that span reads DGSS. Residue Glu-232 coordinates Mg(2+).

It belongs to the FBPase class 1 family. Homotetramer. The cofactor is Mg(2+).

It localises to the cytoplasm. It catalyses the reaction beta-D-fructose 1,6-bisphosphate + H2O = beta-D-fructose 6-phosphate + phosphate. Its pathway is carbohydrate biosynthesis; gluconeogenesis. This Helicobacter pylori (strain J99 / ATCC 700824) (Campylobacter pylori J99) protein is Fructose-1,6-bisphosphatase class 1.